A 296-amino-acid chain; its full sequence is Bifunctional protein FolD (296 aa).

NADP(+)-binding positions include 166–168 (GRS), Ser195, and Thr236.

This sequence belongs to the tetrahydrofolate dehydrogenase/cyclohydrolase family. As to quaternary structure, homodimer.

The enzyme catalyses (6R)-5,10-methylene-5,6,7,8-tetrahydrofolate + NADP(+) = (6R)-5,10-methenyltetrahydrofolate + NADPH. The catalysed reaction is (6R)-5,10-methenyltetrahydrofolate + H2O = (6R)-10-formyltetrahydrofolate + H(+). It functions in the pathway one-carbon metabolism; tetrahydrofolate interconversion. In terms of biological role, catalyzes the oxidation of 5,10-methylenetetrahydrofolate to 5,10-methenyltetrahydrofolate and then the hydrolysis of 5,10-methenyltetrahydrofolate to 10-formyltetrahydrofolate. This is Bifunctional protein FolD from Dehalococcoides mccartyi (strain CBDB1).